The chain runs to 312 residues: Methionyl-tRNA formyltransferase (312 aa).

A (6S)-5,6,7,8-tetrahydrofolate-binding site is contributed by 112 to 115 (SLLP).

It belongs to the Fmt family.

It carries out the reaction L-methionyl-tRNA(fMet) + (6R)-10-formyltetrahydrofolate = N-formyl-L-methionyl-tRNA(fMet) + (6S)-5,6,7,8-tetrahydrofolate + H(+). In terms of biological role, attaches a formyl group to the free amino group of methionyl-tRNA(fMet). The formyl group appears to play a dual role in the initiator identity of N-formylmethionyl-tRNA by promoting its recognition by IF2 and preventing the misappropriation of this tRNA by the elongation apparatus. The protein is Methionyl-tRNA formyltransferase of Syntrophus aciditrophicus (strain SB).